Reading from the N-terminus, the 388-residue chain is Beta-hexosaminidase LpqI (388 aa).

A signal peptide spans 1–19 (MAFPRTLAILAAAAALVVA). C20 is lipidated: N-palmitoyl cysteine. The S-diacylglycerol cysteine moiety is linked to residue C20. Residues D123, R131, R193, and 223–224 (KH) contribute to the substrate site. H236 acts as the Proton donor/acceptor in catalysis. D311 functions as the Nucleophile in the catalytic mechanism.

This sequence belongs to the glycosyl hydrolase 3 family.

It is found in the cell inner membrane. It carries out the reaction Hydrolysis of terminal non-reducing N-acetyl-D-hexosamine residues in N-acetyl-beta-D-hexosaminides.. Its pathway is cell wall biogenesis; peptidoglycan recycling. Plays a role in peptidoglycan recycling by cleaving the terminal beta-1,4-linked N-acetylglucosamine (GlcNAc) from peptidoglycan fragments. Acts as a regulator for GlcNAc-MurNAc levels by cleaving disaccharides and allowing the breakdown of MurNAc. The chain is Beta-hexosaminidase LpqI from Mycobacterium bovis (strain BCG / Pasteur 1173P2).